Consider the following 545-residue polypeptide: DNA mismatch repair protein MutL (545 aa).

Residues 516–545 (GRRSGARGGGEARPRPQEESFPEAPLPREP) form a disordered region.

This sequence belongs to the DNA mismatch repair MutL/HexB family.

Functionally, this protein is involved in the repair of mismatches in DNA. It is required for dam-dependent methyl-directed DNA mismatch repair. May act as a 'molecular matchmaker', a protein that promotes the formation of a stable complex between two or more DNA-binding proteins in an ATP-dependent manner without itself being part of a final effector complex. In Thermus thermophilus (strain ATCC BAA-163 / DSM 7039 / HB27), this protein is DNA mismatch repair protein MutL.